We begin with the raw amino-acid sequence, 578 residues long: GRAM domain-containing protein 4 (578 aa).

Positions 83–135 form a coiled coil; sequence HLEIALLEKHFLQEELRKLREETNIDTLKQELEKERQRRTELEQKITDIAKTR. The interval 132-157 is disordered; the sequence is AKTRTDESATQQLSKGPSQTNGADKQ. The segment covering 139–154 has biased composition (polar residues); that stretch reads SATQQLSKGPSQTNGA. Transmembrane regions (helical) follow at residues 236 to 256, 334 to 354, and 356 to 376; these read IAFIIYMNAVWHGWAIPMFLF, MTQKLYIGLWAAFVASCFFHY, and TIGLCMGLYAGIKFFLIDFIF. Positions 446–524 constitute a GRAM domain; sequence SSFHEIFSLL…TDITDIQKYK (79 aa).

Its subcellular location is the mitochondrion membrane. It is found in the endoplasmic reticulum membrane. Functionally, plays a role as a mediator of e2f1-induced apoptosis in the absence of p53/TP53. This Xenopus laevis (African clawed frog) protein is GRAM domain-containing protein 4 (gramd4).